The primary structure comprises 802 residues: Potassium channel AKT2/3 (802 aa).

At 1-79 (MDLKYSASHC…PMDSRYRCWE (79 aa)) the chain is on the cytoplasmic side. Residues 80 to 100 (FYMVLLVAYSAWVYPFEVAFL) form a helical membrane-spanning segment. Topologically, residues 101-109 (NSSPKRNLC) are extracellular. Residues 110–130 (IADNIVDLFFAVDIVLTFFVA) form a helical membrane-spanning segment. Topologically, residues 131–153 (YIDERTQLLVREPKQIAVRYLST) are cytoplasmic. Residues 154–174 (WFLMDVASTIPFDAIGYLITG) traverse the membrane as a helical segment. The Extracellular segment spans residues 175-183 (TSTLNITCN). N-linked (GlcNAc...) asparagine glycosylation occurs at Asn-179. A helical; Voltage-sensor transmembrane segment spans residues 184–204 (LLGLLRFWRLRRVKHLFTRLE). Residues 205–218 (KDIRYSYFWIRCFR) lie on the Cytoplasmic side of the membrane. A helical membrane pass occupies residues 219–239 (LLSVTLFLVHCAGCSYYLIAD). Residues 240 to 265 (RYPHQGKTWTDAIPNFTETSLSIRYI) are Extracellular-facing. Asn-254 carries N-linked (GlcNAc...) asparagine glycosylation. Positions 266–285 (AAIYWSITTMTTVGYGDLHA) form an intramembrane region, pore-forming. Residues 286-288 (SNT) lie on the Extracellular side of the membrane. A helical membrane pass occupies residues 289–309 (IEMVFITVYMLFNLGLTAYLI). The Cytoplasmic segment spans residues 310-802 (GNMTNLVVEG…KLYFVVNKII (493 aa)). An a nucleoside 3',5'-cyclic phosphate-binding site is contributed by 394 to 513 (LFKGVSREIL…ATMLKNFLQH (120 aa)). ANK repeat units lie at residues 540 to 569 (NIAS…SPDI), 573 to 602 (KGKT…NIHI), 606 to 636 (NGNS…SDPH), 637 to 666 (IAGD…NVDT), and 670 to 699 (HGVT…DVVC). Residues 725–802 (RVSIYRGHPL…KLYFVVNKII (78 aa)) form the KHA domain.

This sequence belongs to the potassium channel family. Plant (TC 1.A.1.4) subfamily. The potassium channel is probably composed of a homo- or heterotetrameric complex of pore-forming subunits. Interacts with the phosphatase PPC2A and the kinase CIPK6. May interact with AKT1, KAT1 and KAT3. Interacts with SLAC1. Dephosphorylated by PP2CA. Expressed mainly in the phloem tissues throughout the plant but also, at a lower level, in leaf epiderm, mesophyll and guard cells.

It localises to the endoplasmic reticulum membrane. In terms of biological role, highly selective and weak inward-rectifying potassium channel. Plays a role in both loading and unloading potassium into/from the phloem sap. Seems to control sugar loading into phloem via a voltage-dependent process. Blocked by physiological concentrations of external calcium and by external acidification. May interact with the cytoskeleton or with regulatory proteins. Dephosphorylation by PP2CA not only leads to the inhibition of potassium currents but also to an increase of the voltage-dependence of the channel. Regulated by the CBL4/CIPK6 calcium sensor/protein kinase complex via a kinase interaction-dependent but phosphorylation-independent translocation of the channel to the plasma membrane. The sequence is that of Potassium channel AKT2/3 (AKT2) from Arabidopsis thaliana (Mouse-ear cress).